The primary structure comprises 923 residues: Meiotic recombination protein rec11 (923 aa).

The SCD domain occupies 278–365; the sequence is LFSRIHDIRA…DRFSLRIVEI (88 aa).

In Schizosaccharomyces pombe (strain 972 / ATCC 24843) (Fission yeast), this protein is Meiotic recombination protein rec11 (rec11).